The primary structure comprises 333 residues: Procathepsin L (333 aa).

Residues 1–17 (MNPTLILAAFCLGIASA) form the signal peptide. A propeptide spans 18 to 113 (TLTFDHSLEA…KVFQEPLFYE (96 aa)) (activation peptide). Glutamate 122 is a Zn(2+) binding site. Intrachain disulfides connect cysteine 135-cysteine 178 and cysteine 169-cysteine 211. The active site involves cysteine 138. Zn(2+)-binding residues include glutamate 163, aspartate 184, glutamate 199, glutamate 205, and glutamate 209. Asparagine 221 is a glycosylation site (N-linked (GlcNAc...) asparagine). Zn(2+) contacts are provided by aspartate 227, aspartate 250, histidine 253, aspartate 273, and aspartate 275. Residues cysteine 269 and cysteine 322 are joined by a disulfide bond. Residue histidine 276 is part of the active site. A propeptide spanning residues 289–291 (ESD) is cleaved from the precursor. The active site involves asparagine 300.

The protein belongs to the peptidase C1 family. In terms of assembly, dimer of a heavy and a light chain linked by disulfide bonds. Interacts with Long isoform of CD74/Ii chain; the interaction stabilizes the conformation of mature CTSL. In terms of processing, during export along the endocytic pathway, pro-CTSL undergoes several proteolytic cleavages to generate the CTSL single-chain and two-chain mature forms, composed of a heavy chain linked to a light chain by disulfide bonds. Autocleavage; produces the single-chain CTSL after cleavage of the propeptide. The cleavage can be intermolecular.

The protein localises to the lysosome. It localises to the apical cell membrane. Its subcellular location is the cytoplasmic vesicle. The protein resides in the secretory vesicle. It is found in the chromaffin granule. The protein localises to the secreted. It localises to the extracellular space. Its subcellular location is the nucleus. The enzyme catalyses Specificity close to that of papain. As compared to cathepsin B, cathepsin L exhibits higher activity toward protein substrates, but has little activity on Z-Arg-Arg-NHMec, and no peptidyl-dipeptidase activity.. With respect to regulation, inhibited by the propeptide produced by autocleavage. Long isoform of CD74/Ii chain stabilizes the conformation of mature CTSL by binding to its active site and serving as a chaperone to help maintain a pool of mature enzyme in endocytic compartments and extracellular space of APCs. IFNG enhances the conversion into the CTSL mature and active form. Inhibited by CST6. Inhibited by the glycopeptide antibiotic teicoplanin. Inhibited by amantadine. Functionally, thiol protease important for the overall degradation of proteins in lysosomes. Plays a critical for normal cellular functions such as general protein turnover, antigen processing and bone remodeling. Involved in the solubilization of cross-linked TG/thyroglobulin and in the subsequent release of thyroid hormone thyroxine (T4) by limited proteolysis of TG/thyroglobulin in the thyroid follicle lumen. In neuroendocrine chromaffin cells secretory vesicles, catalyzes the prohormone proenkephalin processing to the active enkephalin peptide neurotransmitter. In thymus, regulates CD4(+) T cell positive selection by generating the major histocompatibility complex class II (MHCII) bound peptide ligands presented by cortical thymic epithelial cells. Also mediates invariant chain processing in cortical thymic epithelial cells. Major elastin-degrading enzyme at neutral pH. Accumulates as a mature and active enzyme in the extracellular space of antigen presenting cells (APCs) to regulate degradation of the extracellular matrix in the course of inflammation. Secreted form generates endostatin from COL18A1. Critical for cardiac morphology and function. Plays an important role in hair follicle morphogenesis and cycling, as well as epidermal differentiation. Required for maximal stimulation of steroidogenesis by TIMP1. (Microbial infection) In cells lacking TMPRSS2 expression, facilitates human coronaviruses SARS-CoV and SARS-CoV-2 infections via a slow acid-activated route with the proteolysis of coronavirus spike (S) glycoproteins in lysosome for entry into host cell. Proteolysis within lysosomes is sufficient to activate membrane fusion by coronaviruses SARS-CoV and EMC (HCoV-EMC) S as well as Zaire ebolavirus glycoproteins. Its function is as follows. Functions in the regulation of cell cycle progression through proteolytic processing of the CUX1 transcription factor. Translation initiation at downstream start sites allows the synthesis of isoforms that are devoid of a signal peptide and localize to the nucleus where they cleave the CUX1 transcription factor and modify its DNA binding properties. This chain is Procathepsin L, found in Homo sapiens (Human).